Consider the following 549-residue polypeptide: Cilia- and flagella-associated protein 45 (549 aa).

The tract at residues 1-29 is disordered; the sequence is MPLSPAGVLSSTSTASNRSRNRPRYRTKA. 3 coiled-coil regions span residues 119 to 232, 259 to 393, and 434 to 522; these read REEL…MMEV, IVEQ…KRNQ, and AVQV…KIEE. The interval 388–416 is disordered; sequence RAKRNQEVADREWRRKEKENAQKKMETEA.

Belongs to the CFAP45 family. Microtubule inner protein component of sperm flagellar doublet microtubules. Interacts with AK8; dimerization with AK8 may create a cavity at the interface of the dimer that can accommodate AMP. Interacts with CFAP52. Interacts with ENKUR. Directly interacts with DNALI1. Interacts with DNAH11. Interacts with DNAI1. In terms of tissue distribution, expressed in respiratory cells (at protein level).

Its subcellular location is the cytoplasm. It is found in the cytoskeleton. The protein localises to the cilium axoneme. The protein resides in the flagellum axoneme. It localises to the cell projection. Its subcellular location is the cilium. It is found in the flagellum. Functionally, microtubule inner protein (MIP) part of the dynein-decorated doublet microtubules (DMTs) in cilia axoneme, which is required for motile cilia beating. It is an AMP-binding protein that may facilitate dynein ATPase-dependent ciliary and flagellar beating via adenine nucleotide homeostasis. May function as a donor of AMP to AK8 and hence promote ADP production. This Sus scrofa (Pig) protein is Cilia- and flagella-associated protein 45 (CFAP45).